The primary structure comprises 434 residues: Xylose isomerase (434 aa).

Active-site residues include His100 and Asp103. Mg(2+) is bound by residues Glu231, Glu267, His270, Asp295, Asp306, Asp308, and Asp338.

This sequence belongs to the xylose isomerase family. Homotetramer. Requires Mg(2+) as cofactor.

It is found in the cytoplasm. The catalysed reaction is alpha-D-xylose = alpha-D-xylulofuranose. The polypeptide is Xylose isomerase (Ruegeria pomeroyi (strain ATCC 700808 / DSM 15171 / DSS-3) (Silicibacter pomeroyi)).